Here is a 308-residue protein sequence, read N- to C-terminus: ADP-L-glycero-D-manno-heptose-6-epimerase (308 aa).

NADP(+) is bound by residues 10-11, 31-32, Lys38, Lys53, 75-79, and Asn92; these read MI, DN, and EGACS. Residue Tyr140 is the Proton acceptor of the active site. Residue Lys144 participates in NADP(+) binding. Asn169 lines the substrate pocket. 2 residues coordinate NADP(+): Val170 and Lys178. Residue Lys178 is the Proton acceptor of the active site. Substrate contacts are provided by residues Ser180, His187, 201 to 204, Arg209, and Tyr272; that span reads FEGS.

This sequence belongs to the NAD(P)-dependent epimerase/dehydratase family. HldD subfamily. Homopentamer. NADP(+) is required as a cofactor.

The enzyme catalyses ADP-D-glycero-beta-D-manno-heptose = ADP-L-glycero-beta-D-manno-heptose. The protein operates within nucleotide-sugar biosynthesis; ADP-L-glycero-beta-D-manno-heptose biosynthesis; ADP-L-glycero-beta-D-manno-heptose from D-glycero-beta-D-manno-heptose 7-phosphate: step 4/4. Its function is as follows. Catalyzes the interconversion between ADP-D-glycero-beta-D-manno-heptose and ADP-L-glycero-beta-D-manno-heptose via an epimerization at carbon 6 of the heptose. The polypeptide is ADP-L-glycero-D-manno-heptose-6-epimerase (Actinobacillus pleuropneumoniae serotype 5b (strain L20)).